The following is a 295-amino-acid chain: sn-glycerol-3-phosphate transport system permease protein UgpA (295 aa).

The Cytoplasmic segment spans residues 1-11 (MSSSRPVFRSR). The helical transmembrane segment at 12-32 (WLPYLLVAPQLIITVIFFIWP) threads the bilayer. Over 33 to 80 (AGEALWYSLQSVDPFGFSSQFVGLDNFVTLFHDSYYLDAFWTTIKFST) the chain is Periplasmic. Positions 76 to 284 (IKFSTFVTVS…FLVIVLTVVQ (209 aa)) constitute an ABC transmembrane type-1 domain. The chain crosses the membrane as a helical span at residues 81 to 101 (FVTVSGLLVSLFFAALVEYIV). Over 102–109 (RGSRFYQT) the chain is Cytoplasmic. Residues 110 to 130 (LMLLPYAVAPAVAAVLWIFLF) traverse the membrane as a helical segment. Over 131 to 156 (NPGRGLITHFLAEFGYDWNHAQNSGQ) the chain is Periplasmic. Residues 157–177 (AMFLVVFASVWKQISYNFLFF) traverse the membrane as a helical segment. At 178 to 207 (YAALQSIPRSLIEAAAIDGAGPIRRFFKIA) the chain is on the cytoplasmic side. The chain crosses the membrane as a helical span at residues 208–228 (LPLIAPVSFFLLVVNLVYAFF). The Periplasmic portion of the chain corresponds to 229 to 262 (DTFPVIDAATSGGPVQATTTLIYKIYREGFTGLD). A helical transmembrane segment spans residues 263 to 283 (LASSAAQSVVLMFLVIVLTVV). Residues 284–295 (QFRYVESKVRYQ) are Cytoplasmic-facing.

It belongs to the binding-protein-dependent transport system permease family. UgpAE subfamily. In terms of assembly, the complex is composed of two ATP-binding proteins (UgpC), two transmembrane proteins (UgpA and UgpE) and a solute-binding protein (UgpB).

The protein localises to the cell inner membrane. Its function is as follows. Part of the ABC transporter complex UgpBAEC involved in sn-glycerol-3-phosphate (G3P) import. Probably responsible for the translocation of the substrate across the membrane. The chain is sn-glycerol-3-phosphate transport system permease protein UgpA (ugpA) from Escherichia coli (strain UTI89 / UPEC).